Consider the following 191-residue polypeptide: ECF RNA polymerase sigma-E factor (191 aa).

Positions methionine 1–glycine 153 are binds RNAP core. The tract at residues leucine 25–arginine 92 is sigma-70 factor domain-2. Positions aspartate 48–leucine 61 match the Polymerase core binding motif. A sigma-70 factor domain-4 region spans residues glutamine 129–alanine 180. The H-T-H motif DNA-binding region spans tyrosine 156 to phenylalanine 175.

Belongs to the sigma-70 factor family. ECF subfamily. In terms of assembly, interacts transiently with the RNAP catalytic core formed by RpoA, RpoB, RpoC and RpoZ (2 alpha, 1 beta, 1 beta' and 1 omega subunit) to form the RNAP holoenzyme that can initiate transcription. Interacts 1:1 with anti-sigma-E factor RseA which prevents binding to RNAP catalytic core.

It localises to the cytoplasm. Its activity is regulated as follows. ECF sigma-E is held in an inactive form by its cognate anti-sigma factor (RseA) until released by regulated intramembrane proteolysis (RIP). RIP occurs when an extracytoplasmic signal (periplasmic stress and excess LPS) triggers a concerted proteolytic cascade to transmit information and elicit cellular responses. The anti-sigma factor RseA is an inner membrane protein, binding sigma-E in the cytoplasm and RseB in the periplasm. RseA is first cut extracytoplasmically (site-1 protease, S1P, by DegS), then within the membrane itself (site-2 protease, S2P, by RseP), while cytoplasmic proteases (predominantly ClpX-ClpP) finish degrading the regulatory protein, liberating sigma-E. Degradation of RseA requires 2 signals to activate DegS; an outer membrane protein (OMP) signal activates DegS, while an LPS signal causes release of RseB from RseA, freeing RseA to be cleaved. Its function is as follows. Sigma factors are initiation factors that promote the attachment of RNA polymerase (RNAP) to specific initiation sites and are then released. Extracytoplasmic function (ECF) sigma-E controls the envelope stress response, responding to periplasmic protein stress, increased levels of periplasmic lipopolysaccharide (LPS) as well as heat shock and oxidative stress; it controls protein processing in the extracytoplasmic compartment. The protein is ECF RNA polymerase sigma-E factor (rpoE) of Escherichia coli O157:H7.